The following is a 132-amino-acid chain: Small ribosomal subunit protein uS8 (132 aa).

This sequence belongs to the universal ribosomal protein uS8 family. As to quaternary structure, part of the 30S ribosomal subunit. Contacts proteins S5 and S12.

In terms of biological role, one of the primary rRNA binding proteins, it binds directly to 16S rRNA central domain where it helps coordinate assembly of the platform of the 30S subunit. The chain is Small ribosomal subunit protein uS8 from Rhodospirillum centenum (strain ATCC 51521 / SW).